An 86-amino-acid polypeptide reads, in one-letter code: Small ribosomal subunit protein uS17 (86 aa).

It belongs to the universal ribosomal protein uS17 family. As to quaternary structure, part of the 30S ribosomal subunit.

In terms of biological role, one of the primary rRNA binding proteins, it binds specifically to the 5'-end of 16S ribosomal RNA. The polypeptide is Small ribosomal subunit protein uS17 (Roseiflexus castenholzii (strain DSM 13941 / HLO8)).